Reading from the N-terminus, the 363-residue chain is S-adenosylmethionine:tRNA ribosyltransferase-isomerase (363 aa).

This sequence belongs to the QueA family. Monomer.

It localises to the cytoplasm. It carries out the reaction 7-aminomethyl-7-carbaguanosine(34) in tRNA + S-adenosyl-L-methionine = epoxyqueuosine(34) in tRNA + adenine + L-methionine + 2 H(+). Its pathway is tRNA modification; tRNA-queuosine biosynthesis. In terms of biological role, transfers and isomerizes the ribose moiety from AdoMet to the 7-aminomethyl group of 7-deazaguanine (preQ1-tRNA) to give epoxyqueuosine (oQ-tRNA). This is S-adenosylmethionine:tRNA ribosyltransferase-isomerase from Haemophilus influenzae (strain ATCC 51907 / DSM 11121 / KW20 / Rd).